The following is a 2327-amino-acid chain: Chondroitin sulfate proteoglycan 4 (2327 aa).

The signal sequence occupies residues 1 to 29 (MLLGPGHPLSAPALALALTLALLVRSTAP). Laminin G-like domains are found at residues 30–193 (ASFF…HEGC) and 203–381 (VGLG…SAGC). The interval 30–640 (ASFFGENHLE…HRGGPAQDLT (611 aa)) is globular or compact configuration stabilized by disulfide bonds. The segment at 30 to 640 (ASFFGENHLE…HRGGPAQDLT (611 aa)) is neurite growth inhibition. Topologically, residues 30 to 2229 (ASFFGENHLE…LGFLEANMFS (2200 aa)) are extracellular. An N-linked (GlcNAc...) asparagine glycan is attached at Asn-130. An intrachain disulfide couples Cys-170 to Cys-193. Asn-349 is a glycosylation site (N-linked (GlcNAc...) asparagine). Residues Cys-355 and Cys-381 are joined by a disulfide bond. Asn-428 carries an N-linked (GlcNAc...) asparagine glycan. CSPG repeat units lie at residues 429–524 (FTQL…LEVS), 554–646 (PRII…VSDG), and 663–765 (AIQI…LEVQ). The segment at 575 to 1045 (GPEIFQAYDP…RGGQRLLTTD (471 aa)) is interaction with COL6A2. An interaction with COL5A1 region spans residues 632 to 1451 (RGGPAQDLTF…SETQTDAFVL (820 aa)). N-linked (GlcNAc...) asparagine glycans are attached at residues Asn-686 and Asn-773. CSPG repeat units follow at residues 784–883 (TVWM…FRVT) and 903–994 (NAPV…FVAT). Ser-1000 carries an O-linked (Xyl...) (chondroitin sulfate) serine glycan. 9 CSPG repeats span residues 1023–1115 (APVQ…VSDG), 1131–1221 (YLHV…FSVA), 1243–1342 (PLQL…LDVA), 1361–1454 (TVIP…LLAN), 1478–1568 (PPVL…LSDG), 1586–1684 (LLSL…LLLS), 1709–1808 (PSRL…FRAH), 1837–1929 (PPQP…MSDG), and 1946–2034 (TIEV…VVAL). N-linked (GlcNAc...) asparagine glycosylation is found at Asn-1136 and Asn-1207. Residues Asn-1369 and Asn-1454 are each glycosylated (N-linked (GlcNAc...) asparagine). The neurite growth inhibition stretch occupies residues 1591–2226 (GTRKLTVCPE…GGFLGFLEAN (636 aa)). Positions 1592-2226 (TRKLTVCPES…GGFLGFLEAN (635 aa)) are cysteine-containing. Asn-1650 carries N-linked (GlcNAc...) asparagine glycosylation. 5 N-linked (GlcNAc...) asparagine glycosylation sites follow: Asn-1914, Asn-2021, Asn-2039, Asn-2045, and Asn-2080. Residues 2043 to 2152 (TVNVTVQALL…AGDRLTLELW (110 aa)) form a CSPG 15 repeat. The tract at residues 2190-2210 (ETEKPGRSVPTGQPGQAASSP) is disordered. A compositionally biased stretch (polar residues) spans 2199-2210 (PTGQPGQAASSP). The helical transmembrane segment at 2230–2250 (IIIPVCLILLLLALILPLLFY) threads the bilayer. At 2251-2327 (LRKRNKTGKH…PALRNGQYWV (77 aa)) the chain is on the cytoplasmic side. Residue Thr-2257 is modified to Phosphothreonine; by PKC/PRKCA. A PDZ-binding motif is present at residues 2325–2327 (YWV).

Interacts with ITGA4 through its chondroitin sulfate glycosaminoglycan. Interacts with BCAR1, CDC42 and ACK1. Interacts with MMP16. Interacts with the first PDZ domain of MPDZ. Interacts with PRKCA. Interacts with LGALS3 and the integrin composed of ITGB1 and ITGA3. Binds TNC, laminin-1, COL5A1 and COL6A2. Interacts with PLG and angiostatin. Binds FGF2 and PDGFA. Interacts with GRIP1, GRIP2 and GRIA2. Forms a ternary complex with GRIP1 and GRIA2. O-glycosylated; contains glycosaminoglycan chondroitin sulfate which are required for proper localization and function in stress fiber formation. Involved in interaction with MMP16 and ITGA4. In terms of processing, phosphorylation by PRKCA regulates its subcellular location and function in cell motility. Expressed in microcascular pericytes and not endothelial cells.

The protein localises to the cell membrane. The protein resides in the apical cell membrane. Its subcellular location is the cell projection. It is found in the lamellipodium membrane. It localises to the cell surface. In terms of biological role, proteoglycan playing a role in cell proliferation and migration which stimulates endothelial cells motility during microvascular morphogenesis. May also inhibit neurite outgrowth and growth cone collapse during axon regeneration. Cell surface receptor for collagen alpha 2(VI) which may confer cells ability to migrate on that substrate. Binds through its extracellular N-terminus growth factors, extracellular matrix proteases modulating their activity. May regulate MPP16-dependent degradation and invasion of type I collagen participating in melanoma cells invasion properties. May modulate the plasminogen system by enhancing plasminogen activation and inhibiting angiostatin. Also functions as a signal transducing protein by binding through its cytoplasmic C-terminus scaffolding and signaling proteins. May promote retraction fiber formation and cell polarization through Rho GTPase activation. May stimulate alpha-4, beta-1 integrin-mediated adhesion and spreading by recruiting and activating a signaling cascade through CDC42, ACK1 and BCAR1. May activate FAK and ERK1/ERK2 signaling cascades. This chain is Chondroitin sulfate proteoglycan 4 (Cspg4), found in Mus musculus (Mouse).